We begin with the raw amino-acid sequence, 101 residues long: Small ribosomal subunit protein uS10 (101 aa).

Belongs to the universal ribosomal protein uS10 family. As to quaternary structure, part of the 30S ribosomal subunit.

In terms of biological role, involved in the binding of tRNA to the ribosomes. The polypeptide is Small ribosomal subunit protein uS10 (Corynebacterium urealyticum (strain ATCC 43042 / DSM 7109)).